The following is a 614-amino-acid chain: Bifunctional enzyme CysN/CysC (614 aa).

A sulfate adenylyltransferase region spans residues 1–441; the sequence is MTTLLRLATA…SLVTAQDRPP (441 aa). The tr-type G domain maps to 2–217; the sequence is TTLLRLATAG…DVYIAGDRNM (216 aa). A G1 region spans residues 11 to 18; sequence GSVDDGKS. 11–18 is a GTP binding site; the sequence is GSVDDGKS. The segment at 67-71 is G2; sequence GITID. The tract at residues 88-91 is G3; sequence DTPG. GTP is bound by residues 88–92 and 143–146; these read DTPGH and NKMD. The G4 stretch occupies residues 143–146; sequence NKMD. The tract at residues 180–182 is G5; it reads SAL. Residues 442-614 form an adenylyl-sulfate kinase region; sequence RGKTVWFTGL…EVIDLLESSS (173 aa). An ATP-binding site is contributed by 450 to 457; the sequence is GLSGSGKS. Serine 524 acts as the Phosphoserine intermediate in catalysis. A disordered region spans residues 578 to 597; the sequence is GIDSPYQRPKNPDLRLTPDR. The span at 587 to 597 shows a compositional bias: basic and acidic residues; the sequence is KNPDLRLTPDR.

This sequence in the C-terminal section; belongs to the APS kinase family. The protein in the N-terminal section; belongs to the TRAFAC class translation factor GTPase superfamily. Classic translation factor GTPase family. CysN/NodQ subfamily. Heterodimer composed of CysD, the smaller subunit, and CysNC.

It catalyses the reaction sulfate + ATP + H(+) = adenosine 5'-phosphosulfate + diphosphate. It carries out the reaction adenosine 5'-phosphosulfate + ATP = 3'-phosphoadenylyl sulfate + ADP + H(+). It functions in the pathway sulfur metabolism; hydrogen sulfide biosynthesis; sulfite from sulfate: step 1/3. The protein operates within sulfur metabolism; hydrogen sulfide biosynthesis; sulfite from sulfate: step 2/3. Its function is as follows. With CysD forms the ATP sulfurylase (ATPS) that catalyzes the adenylation of sulfate producing adenosine 5'-phosphosulfate (APS) and diphosphate, the first enzymatic step in sulfur assimilation pathway. APS synthesis involves the formation of a high-energy phosphoric-sulfuric acid anhydride bond driven by GTP hydrolysis by CysN coupled to ATP hydrolysis by CysD. In terms of biological role, APS kinase catalyzes the synthesis of activated sulfate. The polypeptide is Bifunctional enzyme CysN/CysC (cysNC) (Mycobacterium tuberculosis (strain CDC 1551 / Oshkosh)).